The primary structure comprises 648 residues: Transketolase (648 aa).

A substrate-binding site is contributed by histidine 22. Thiamine diphosphate is bound by residues histidine 62 and 109–111 (GPL). Aspartate 150 serves as a coordination point for Mg(2+). Glycine 151 and asparagine 180 together coordinate thiamine diphosphate. Asparagine 180 and valine 182 together coordinate Mg(2+). Residues histidine 252, arginine 345, and serine 372 each coordinate substrate. Histidine 252 is a binding site for thiamine diphosphate. The Proton donor role is filled by glutamate 397. A thiamine diphosphate-binding site is contributed by phenylalanine 423. Residues histidine 447, aspartate 455, and arginine 506 each contribute to the substrate site.

This sequence belongs to the transketolase family. In terms of assembly, homodimer. It depends on Mg(2+) as a cofactor. Ca(2+) is required as a cofactor. The cofactor is Mn(2+). Requires Co(2+) as cofactor. Thiamine diphosphate serves as cofactor.

The enzyme catalyses D-sedoheptulose 7-phosphate + D-glyceraldehyde 3-phosphate = aldehydo-D-ribose 5-phosphate + D-xylulose 5-phosphate. In terms of biological role, catalyzes the transfer of a two-carbon ketol group from a ketose donor to an aldose acceptor, via a covalent intermediate with the cofactor thiamine pyrophosphate. This Mycoplasma genitalium (strain ATCC 33530 / DSM 19775 / NCTC 10195 / G37) (Mycoplasmoides genitalium) protein is Transketolase (tkt).